A 365-amino-acid chain; its full sequence is S-adenosylmethionine:tRNA ribosyltransferase-isomerase (365 aa).

This sequence belongs to the QueA family. As to quaternary structure, monomer.

It localises to the cytoplasm. The catalysed reaction is 7-aminomethyl-7-carbaguanosine(34) in tRNA + S-adenosyl-L-methionine = epoxyqueuosine(34) in tRNA + adenine + L-methionine + 2 H(+). It functions in the pathway tRNA modification; tRNA-queuosine biosynthesis. Its function is as follows. Transfers and isomerizes the ribose moiety from AdoMet to the 7-aminomethyl group of 7-deazaguanine (preQ1-tRNA) to give epoxyqueuosine (oQ-tRNA). The protein is S-adenosylmethionine:tRNA ribosyltransferase-isomerase of Prochlorococcus marinus (strain NATL2A).